The following is a 630-amino-acid chain: Eukaryotic translation initiation factor 2-alpha kinase 1 (630 aa).

Positions 1–40 (MQGGNSGVRKREEEGDGAGAVAAPPAIDFPAEGPDPEYDE) are disordered. The short motif at 85–104 (LRSRQVFKLLCQTFIKMGLL) is the SIFI-degron element. One can recognise a Protein kinase domain in the interval 167-583 (FEELAILGKG…AIQLLQSELF (417 aa)). ATP contacts are provided by residues 173-181 (LGKGGYGRV) and K196. The tract at residues 259–301 (DQEEDREQCGVKNDESSSSSIIFAEPTPEKEKRFGESDTENQN) is disordered. T285 carries the phosphothreonine modification. Over residues 285 to 294 (TPEKEKRFGE) the composition is skewed to basic and acidic residues. The stretch at 410–415 (ACPYVM) is one HRM 1 repeat. D442 functions as the Proton acceptor in the catalytic mechanism. Phosphothreonine; by autocatalysis is present on residues T486 and T488. Position 493 is a phosphothreonine (T493). The HRM 2 repeat unit spans residues 552–557 (RCPVQA).

The protein belongs to the protein kinase superfamily. Ser/Thr protein kinase family. GCN2 subfamily. As to quaternary structure, synthesized in an inactive form that binds to the N-terminal domain of CDC37. Has to be associated with a multiprotein complex containing Hsp90, CDC37 and PPP5C for maturation and activation by autophosphorylation. The phosphatase PPP5C modulates this activation. Homodimer; homodimerizes in presence of heme, forming a disulfide-linked inactive homodimer. Interacts with DELE1; binds both to full-length DELE1 and processed form of DELE1 (S-DELE1) in response to stress, leading to activate its protein kinase activity and trigger the integrated stress response (ISR). Post-translationally, activated by autophosphorylation; phosphorylated predominantly on serine and threonine residues, but also on tyrosine residues. Autophosphorylation at Thr-488 is required for kinase activation. The active autophosphorylated form apparently is largely refractory to cellular heme fluctuations. In terms of processing, ubiquitinated and degraded by the SIFI complex once the mitochondrial stress has been resolved, thereby providing stress response silencing. Within the SIFI complex, UBR4 initiates ubiquitin chain that are further elongated or branched by KCMF1.

The enzyme catalyses L-seryl-[protein] + ATP = O-phospho-L-seryl-[protein] + ADP + H(+). The catalysed reaction is L-threonyl-[protein] + ATP = O-phospho-L-threonyl-[protein] + ADP + H(+). With respect to regulation, in normal conditions, the protein kinase activity is inhibited; inhibition is relieved by various stress conditions. Inhibited by heme: in presence of heme, forms a disulfide-linked inactive homodimer. Heme depletion relieves inhibition and stimulates kinase activity by autophosphorylation. Inhibited by the heme metabolites biliverdin and bilirubin. Induced by oxidative stress generated by arsenite treatment. Binding of nitric oxide (NO) to the heme iron in the N-terminal heme-binding domain activates the kinase activity, while binding of carbon monoxide (CO) suppresses kinase activity. Protein kinase activity is also activated upon binding to DELE1 in response to various stress, triggering the integrated stress response (ISR): activated by full-length DELE1 in response to iron deficiency, while it is activated by the processed form of DELE1 (S-DELE1) in response to mitochondrial stress. Functionally, metabolic-stress sensing protein kinase that phosphorylates the alpha subunit of eukaryotic translation initiation factor 2 (EIF2S1/eIF-2-alpha) in response to various stress conditions. Key activator of the integrated stress response (ISR) required for adaptation to various stress, such as heme deficiency, oxidative stress, osmotic shock, mitochondrial dysfunction and heat shock. EIF2S1/eIF-2-alpha phosphorylation in response to stress converts EIF2S1/eIF-2-alpha in a global protein synthesis inhibitor, leading to a global attenuation of cap-dependent translation, while concomitantly initiating the preferential translation of ISR-specific mRNAs, such as the transcriptional activator ATF4, and hence allowing ATF4-mediated reprogramming. Acts as a key sensor of heme-deficiency: in normal conditions, binds hemin via a cysteine thiolate and histidine nitrogenous coordination, leading to inhibit the protein kinase activity. This binding occurs with moderate affinity, allowing it to sense the heme concentration within the cell: heme depletion relieves inhibition and stimulates kinase activity, activating the ISR. Thanks to this unique heme-sensing capacity, plays a crucial role to shut off protein synthesis during acute heme-deficient conditions. In red blood cells (RBCs), controls hemoglobin synthesis ensuring a coordinated regulation of the synthesis of its heme and globin moieties. It thereby plays an essential protective role for RBC survival in anemias of iron deficiency. Iron deficiency also triggers activation by full-length DELE1. Also activates the ISR in response to mitochondrial dysfunction: HRI/EIF2AK1 protein kinase activity is activated upon binding to the processed form of DELE1 (S-DELE1), thereby promoting the ATF4-mediated reprogramming. Also acts as an activator of mitophagy in response to mitochondrial damage: catalyzes phosphorylation of eIF-2-alpha (EIF2S1) following activation by S-DELE1, thereby promoting mitochondrial localization of EIF2S1, triggering PRKN-independent mitophagy. This chain is Eukaryotic translation initiation factor 2-alpha kinase 1, found in Homo sapiens (Human).